A 284-amino-acid polypeptide reads, in one-letter code: Proline-rich protein 32 (284 aa).

3 disordered regions span residues 59 to 80 (RPPF…APRH), 97 to 119 (EINS…NMSQ), and 143 to 171 (SGNN…RGPP).

In Mus musculus (Mouse), this protein is Proline-rich protein 32 (Prr32).